Here is a 389-residue protein sequence, read N- to C-terminus: Probable serine/threonine-protein kinase PBL11 (389 aa).

A lipid anchor (N-myristoyl glycine) is attached at Gly-2. The S-palmitoyl cysteine moiety is linked to residue Cys-4. Residues 68–353 (FRPDSVVGEG…NEIVKTMEEL (286 aa)) form the Protein kinase domain. Residues 74-82 (VGEGGFGCV) and Lys-106 contribute to the ATP site. Phosphotyrosine is present on Tyr-151. Residue Asp-203 is the Proton acceptor of the active site. Residues Ser-207 and Ser-237 each carry the phosphoserine modification. 2 positions are modified to phosphothreonine: Thr-238 and Thr-243. Tyr-251 is modified (phosphotyrosine).

This sequence belongs to the protein kinase superfamily. Ser/Thr protein kinase family. As to expression, roots, leaves and stems.

It is found in the cell membrane. The enzyme catalyses L-seryl-[protein] + ATP = O-phospho-L-seryl-[protein] + ADP + H(+). The catalysed reaction is L-threonyl-[protein] + ATP = O-phospho-L-threonyl-[protein] + ADP + H(+). Functionally, may play a role in the regulation of plant growth and development. May be involved in plant defense signaling. The polypeptide is Probable serine/threonine-protein kinase PBL11 (Arabidopsis thaliana (Mouse-ear cress)).